The following is an 805-amino-acid chain: Polyribonucleotide nucleotidyltransferase (805 aa).

Mg(2+) contacts are provided by aspartate 491 and aspartate 497. Residues 558-617 (PRMESMIIDKNKIKNVIGTGGKNVREICEKTGVKIEISQDGTVMIYAVSRDAVEEAKNMI) form the KH domain. An S1 motif domain is found at 627–694 (GKVFSGVISE…DKDHVQLSMR (68 aa)). The disordered stretch occupies residues 702-805 (DLLEHESYSS…GGGNKKPRFF (104 aa)). Positions 709–721 (YSSSKKNGPQSGD) are enriched in polar residues.

This sequence belongs to the polyribonucleotide nucleotidyltransferase family. Requires Mg(2+) as cofactor.

It is found in the cytoplasm. It carries out the reaction RNA(n+1) + phosphate = RNA(n) + a ribonucleoside 5'-diphosphate. Its function is as follows. Involved in mRNA degradation. Catalyzes the phosphorolysis of single-stranded polyribonucleotides processively in the 3'- to 5'-direction. The polypeptide is Polyribonucleotide nucleotidyltransferase (Anaplasma marginale (strain St. Maries)).